The chain runs to 364 residues: 1-aminocyclopropane-1-carboxylate oxidase homolog 11 (364 aa).

The region spanning 213 to 312 (KSLLMICHYY…RISVASFFSS (100 aa)) is the Fe2OG dioxygenase domain. The Fe cation site is built by histidine 237, aspartate 239, and histidine 293. Position 303 (arginine 303) interacts with 2-oxoglutarate.

This sequence belongs to the iron/ascorbate-dependent oxidoreductase family. Requires Fe(2+) as cofactor.

This Arabidopsis thaliana (Mouse-ear cress) protein is 1-aminocyclopropane-1-carboxylate oxidase homolog 11.